A 1051-amino-acid polypeptide reads, in one-letter code: Carbamoyl phosphate synthase large chain (1051 aa).

The carboxyphosphate synthetic domain stretch occupies residues 1–399; sequence MKETPKKVLV…SLQKAVRMLD (399 aa). ATP-binding residues include Arg127, Arg167, Gly173, Gly174, Lys206, Leu208, Glu213, Gly239, Val240, His241, Gln282, and Glu296. The region spanning 131–325 is the ATP-grasp 1 domain; the sequence is RETMIENNLP…LAYVSAKLAL (195 aa). Gln282, Glu296, and Asn298 together coordinate Mg(2+). 3 residues coordinate Mn(2+): Gln282, Glu296, and Asn298. Residues 400-548 are oligomerization domain; that stretch reads IGEPGVVGGK…LTYNGTEDDL (149 aa). Positions 549–930 are carbamoyl phosphate synthetic domain; it reads EFSQGNKLLI…LKSWLSSIPN (382 aa). Residues 673–863 enclose the ATP-grasp 2 domain; that stretch reads SKLLDKLGIS…LINEAMKAIF (191 aa). Arg709, Lys748, Ile750, Glu755, Gly779, Val780, His781, Ser782, Gln822, and Glu834 together coordinate ATP. Mg(2+) contacts are provided by Gln822, Glu834, and Asn836. The Mn(2+) site is built by Gln822, Glu834, and Asn836. One can recognise an MGS-like domain in the interval 930-1051; sequence NRIPNKNGIA…FEISEYGGGI (122 aa). The interval 931–1051 is allosteric domain; that stretch reads RIPNKNGIAL…FEISEYGGGI (121 aa).

This sequence belongs to the CarB family. Composed of two chains; the small (or glutamine) chain promotes the hydrolysis of glutamine to ammonia, which is used by the large (or ammonia) chain to synthesize carbamoyl phosphate. Tetramer of heterodimers (alpha,beta)4. The cofactor is Mg(2+). It depends on Mn(2+) as a cofactor.

It carries out the reaction hydrogencarbonate + L-glutamine + 2 ATP + H2O = carbamoyl phosphate + L-glutamate + 2 ADP + phosphate + 2 H(+). It catalyses the reaction hydrogencarbonate + NH4(+) + 2 ATP = carbamoyl phosphate + 2 ADP + phosphate + 2 H(+). It functions in the pathway amino-acid biosynthesis; L-arginine biosynthesis; carbamoyl phosphate from bicarbonate: step 1/1. It participates in pyrimidine metabolism; UMP biosynthesis via de novo pathway; (S)-dihydroorotate from bicarbonate: step 1/3. Large subunit of the glutamine-dependent carbamoyl phosphate synthetase (CPSase). CPSase catalyzes the formation of carbamoyl phosphate from the ammonia moiety of glutamine, carbonate, and phosphate donated by ATP, constituting the first step of 2 biosynthetic pathways, one leading to arginine and/or urea and the other to pyrimidine nucleotides. The large subunit (synthetase) binds the substrates ammonia (free or transferred from glutamine from the small subunit), hydrogencarbonate and ATP and carries out an ATP-coupled ligase reaction, activating hydrogencarbonate by forming carboxy phosphate which reacts with ammonia to form carbamoyl phosphate. The protein is Carbamoyl phosphate synthase large chain of Saccharolobus islandicus (strain L.S.2.15 / Lassen #1) (Sulfolobus islandicus).